The following is a 345-amino-acid chain: Phosphoribosylformylglycinamidine cyclo-ligase (345 aa).

The protein belongs to the AIR synthase family.

It localises to the cytoplasm. It catalyses the reaction 2-formamido-N(1)-(5-O-phospho-beta-D-ribosyl)acetamidine + ATP = 5-amino-1-(5-phospho-beta-D-ribosyl)imidazole + ADP + phosphate + H(+). The protein operates within purine metabolism; IMP biosynthesis via de novo pathway; 5-amino-1-(5-phospho-D-ribosyl)imidazole from N(2)-formyl-N(1)-(5-phospho-D-ribosyl)glycinamide: step 2/2. In Shewanella sp. (strain ANA-3), this protein is Phosphoribosylformylglycinamidine cyclo-ligase.